The chain runs to 302 residues: Sulfate adenylyltransferase subunit 2 (302 aa).

Belongs to the PAPS reductase family. CysD subfamily. In terms of assembly, heterodimer composed of CysD, the smaller subunit, and CysN.

It carries out the reaction sulfate + ATP + H(+) = adenosine 5'-phosphosulfate + diphosphate. It functions in the pathway sulfur metabolism; hydrogen sulfide biosynthesis; sulfite from sulfate: step 1/3. Functionally, with CysN forms the ATP sulfurylase (ATPS) that catalyzes the adenylation of sulfate producing adenosine 5'-phosphosulfate (APS) and diphosphate, the first enzymatic step in sulfur assimilation pathway. APS synthesis involves the formation of a high-energy phosphoric-sulfuric acid anhydride bond driven by GTP hydrolysis by CysN coupled to ATP hydrolysis by CysD. The protein is Sulfate adenylyltransferase subunit 2 of Xanthomonas campestris pv. campestris (strain 8004).